The primary structure comprises 465 residues: Protein CitXG (465 aa).

Residues 1–182 (MQHFFTTFST…QSLAQNHDFA (182 aa)) are apo-citrate lyase phosphoribosyl-dephospho-CoA transferase. Residues 183-465 (EHIGEQVYLA…TIFFLSFRGN (283 aa)) are 2-(5''-triphosphoribosyl)-3'-dephosphocoenzyme-A synthase.

This sequence in the N-terminal section; belongs to the CitX family. It in the C-terminal section; belongs to the CitG/MdcB family.

The enzyme catalyses apo-[citrate lyase ACP] + 2'-(5''-triphospho-alpha-D-ribosyl)-3'-dephospho-CoA = holo-[citrate lyase ACP] + diphosphate. It carries out the reaction 3'-dephospho-CoA + ATP = 2'-(5''-triphospho-alpha-D-ribosyl)-3'-dephospho-CoA + adenine. Functionally, bifunctional enzyme that catalyzes formation of 2-(5''-triphosphoribosyl)-3'-dephosphocoenzyme-A, and then the transfer of this prosthetic group precursor to the apo-acyl carrier protein (gamma chain) of the citrate lyase to yield the holo-acyl carrier protein. The protein is Protein CitXG (citXG) of Haemophilus influenzae (strain ATCC 51907 / DSM 11121 / KW20 / Rd).